Here is an 87-residue protein sequence, read N- to C-terminus: Large ribosomal subunit protein eL33 (87 aa).

It belongs to the eukaryotic ribosomal protein eL33 family.

The protein is Large ribosomal subunit protein eL33 of Pyrococcus abyssi (strain GE5 / Orsay).